A 107-amino-acid polypeptide reads, in one-letter code: MNKIIKGDRVVVIAGKDKGKQGQVVRVLGGKVVVEGVNVVKRHQKPNPMRGIKGGIITKEMPLDISNIAILNPETNKADRVGIKLIENEGKVKRVRFFKSNGSIIGA.

Belongs to the universal ribosomal protein uL24 family. In terms of assembly, part of the 50S ribosomal subunit.

Functionally, one of two assembly initiator proteins, it binds directly to the 5'-end of the 23S rRNA, where it nucleates assembly of the 50S subunit. One of the proteins that surrounds the polypeptide exit tunnel on the outside of the subunit. This Neisseria gonorrhoeae (strain ATCC 700825 / FA 1090) protein is Large ribosomal subunit protein uL24.